The primary structure comprises 356 residues: DNA polymerase IV (356 aa).

Residues 1–188 (MDTSRKIIHI…IPVTKFYGVG (188 aa)) enclose the UmuC domain. Mg(2+) contacts are provided by aspartate 11 and aspartate 106. The active site involves glutamate 107.

This sequence belongs to the DNA polymerase type-Y family. As to quaternary structure, monomer. Requires Mg(2+) as cofactor.

It localises to the cytoplasm. The catalysed reaction is DNA(n) + a 2'-deoxyribonucleoside 5'-triphosphate = DNA(n+1) + diphosphate. In terms of biological role, poorly processive, error-prone DNA polymerase involved in untargeted mutagenesis. Copies undamaged DNA at stalled replication forks, which arise in vivo from mismatched or misaligned primer ends. These misaligned primers can be extended by PolIV. Exhibits no 3'-5' exonuclease (proofreading) activity. May be involved in translesional synthesis, in conjunction with the beta clamp from PolIII. This chain is DNA polymerase IV, found in Listeria monocytogenes serovar 1/2a (strain ATCC BAA-679 / EGD-e).